The primary structure comprises 78 residues: Apolipoprotein C-I (78 aa).

The signal sequence occupies residues 1–26 (MRLILWLPVLVVVLLMVLEGPAPAQG).

The protein belongs to the apolipoprotein C1 family.

The protein localises to the secreted. Inhibitor of lipoprotein binding to the low density lipoprotein (LDL) receptor, LDL receptor-related protein, and very low density lipoprotein (VLDL) receptor. Associates with high density lipoproteins (HDL) and the triacylglycerol-rich lipoproteins in the plasma and makes up about 10% of the protein of the VLDL and 2% of that of HDL. Appears to interfere directly with fatty acid uptake and is also the major plasma inhibitor of cholesteryl ester transfer protein (CETP). Binds free fatty acids and reduces their intracellular esterification. Modulates the interaction of APOE with beta-migrating VLDL and inhibits binding of beta-VLDL to the LDL receptor-related protein. The polypeptide is Apolipoprotein C-I (APOC1) (Lynx pardinus (Iberian lynx)).